The sequence spans 545 residues: Ribulokinase (545 aa).

The protein belongs to the ribulokinase family.

The catalysed reaction is D-ribulose + ATP = D-ribulose 5-phosphate + ADP + H(+). It catalyses the reaction L-ribulose + ATP = L-ribulose 5-phosphate + ADP + H(+). The protein operates within carbohydrate degradation; L-arabinose degradation via L-ribulose; D-xylulose 5-phosphate from L-arabinose (bacterial route): step 2/3. The polypeptide is Ribulokinase (Staphylococcus aureus (strain USA300)).